The following is a 334-amino-acid chain: D-aspartate oxidase 2 (334 aa).

5 residues coordinate FAD: Asp-38, Lys-39, Ser-46, Gly-310, and Thr-315.

The protein belongs to the DAMOX/DASOX family. FAD is required as a cofactor. As to expression, expressed in the intestinal cells, pharyngeal muscles, and body wall muscles in adult hermaphrodites.

The protein resides in the cytoplasm. It carries out the reaction D-aspartate + O2 + H2O = oxaloacetate + H2O2 + NH4(+). It catalyses the reaction D-glutamate + O2 + H2O = H2O2 + 2-oxoglutarate + NH4(+). With respect to regulation, inhibited by thiolactomycin. Selectively catalyzes the oxidative deamination of acidic amino acids. May play a role in the egg-laying events and early development of the worm, in addition to quality control of the germ cells. This chain is D-aspartate oxidase 2 (ddo-2), found in Caenorhabditis elegans.